Reading from the N-terminus, the 615-residue chain is MFPTRLDSSLAYDIAKAMMDGFNRHYRLFRTESARAKHRFETADWHGQQRAQRDRIEFYDLRVRECFMRLAREFKADEQPMEVWQQVKLHYIGLLVDHHQPELAETFFNSVTTKILHHSYFQNDFIFVRPAVSTEYIENDESETSPTYRSYYPTHDSLAEVLVQMVLDFDLRCPFADLDSDAARVQAAMVEQLGEVKLRANFQLQVLSGLFFRNKGCYIVGKLINGFNEFPFALPVLYGRAGQLVIDAVLFGEDDLLMLFSFARAYFMVDMEIPSAYVQYLRSMMPRKPRNEIYNALGLAKQGKTLFYRDFLHHQRHSTDKFRIAPGIKGMVMLVFDLPSFPYVFKVIKDFYPPPKDTTREQIKAKYLLVKQHDRVGRMADTLEYSEVGFPRARFDDELIAELEKFAPSQLEISDRDGDGRIEVIIKHVYIERRMIPLNIYLQEAFDAGGANPDDTSPAALRAREQIERGVIEYGNALKDLVAANIFPGDMLWKNFGITRHGKVVFYDYDEIEYITDCNFRKVPQARNEEDEMSGEVWYRVGPKDVFPETFAPFLLGNPFVREVFMKHHAELLDAAFWQSHKERIQAGHVYDVFPYDQGKRFHPEISDAQVPSSI.

ATP is bound by residues 325–331 (APGIKGM) and Lys-346. Residue Asp-381 is part of the active site.

Belongs to the AceK family.

It localises to the cytoplasm. The enzyme catalyses L-seryl-[isocitrate dehydrogenase] + ATP = O-phospho-L-seryl-[isocitrate dehydrogenase] + ADP + H(+). Its function is as follows. Bifunctional enzyme which can phosphorylate or dephosphorylate isocitrate dehydrogenase (IDH) on a specific serine residue. This is a regulatory mechanism which enables bacteria to bypass the Krebs cycle via the glyoxylate shunt in response to the source of carbon. When bacteria are grown on glucose, IDH is fully active and unphosphorylated, but when grown on acetate or ethanol, the activity of IDH declines drastically concomitant with its phosphorylation. The polypeptide is Isocitrate dehydrogenase kinase/phosphatase (Albidiferax ferrireducens (strain ATCC BAA-621 / DSM 15236 / T118) (Rhodoferax ferrireducens)).